The chain runs to 318 residues: Ankyrin repeat and SOCS box protein 7 (318 aa).

7 ANK repeats span residues 13 to 42, 46 to 75, 80 to 109, 116 to 145, 149 to 178, 180 to 208, and 213 to 242; these read QEES…SPNG, NGWT…DPTV, GGFT…RSDI, DGWT…EVDP, KGTT…NIDI, NGFL…DTNL, and DGQT…DTNT. Residues 265–318 form the SOCS box domain; sequence LDFLQEVTRQPRNLQDLCRIKIRQCIGLQNLKLLDELPIAKVMKDYLKHKSDDI.

This sequence belongs to the ankyrin SOCS box (ASB) family. In terms of assembly, interacts with CUL5. Interacts with RNF7. Interacts with PSRC1.

It functions in the pathway protein modification; protein ubiquitination. Functionally, probable substrate-recognition component of a SCF-like ECS (Elongin-Cullin-SOCS-box protein) E3 ubiquitin-protein ligase complex which mediates the ubiquitination and subsequent proteasomal degradation of target proteins. Plays a role in spindle dynamics and genome integrity by targeting the mitotic progression protein PSRC1 for proteasomal degradation in a cell cycle-dependent manner. Also participates in meiosis by mediating the proper attachment between kinetochores and microtubules. In Pongo abelii (Sumatran orangutan), this protein is Ankyrin repeat and SOCS box protein 7 (ASB7).